The primary structure comprises 802 residues: Oligophrenin-1 (802 aa).

The PH domain occupies 265–368 (QPTIEGYLYT…WMEAMDGKEP (104 aa)). In terms of domain architecture, Rho-GAP spans 380 to 564 (MELNEVGFKF…ILIEHFGKIY (185 aa)). Disordered regions lie at residues 606–665 (SLDE…SEPC) and 681–802 (GTKA…GDES). The span at 617-627 (QTPNGTITSNL) shows a compositional bias: polar residues. Residues 716–732 (HHKEGDTDGFSKVRPPG) are compositionally biased toward basic and acidic residues.

As to quaternary structure, interacts with HOMER1. Interacts with AMPA receptor complexes. Interacts with SH3GL2 (endophilin-A1). Interacts (via C-terminus) with NR1D1.

The protein localises to the postsynapse. It localises to the presynapse. The protein resides in the cell projection. It is found in the axon. Its subcellular location is the dendritic spine. The protein localises to the dendrite. It localises to the cytoplasm. In terms of biological role, stimulates GTP hydrolysis of members of the Rho family. Its action on RHOA activity and signaling is implicated in growth and stabilization of dendritic spines, and therefore in synaptic function. Critical for the stabilization of AMPA receptors at postsynaptic sites. Critical for the regulation of synaptic vesicle endocytosis at presynaptic terminals. Required for the localization of NR1D1 to dendrites, can suppress its repressor activity and protect it from proteasomal degradation. This is Oligophrenin-1 (Ophn1) from Mus musculus (Mouse).